We begin with the raw amino-acid sequence, 677 residues long: DNA ligase (677 aa).

NAD(+) contacts are provided by residues 32–36, 81–82, and E112; these read DAQYD and SL. Residue K114 is the N6-AMP-lysine intermediate of the active site. Residues R135, E171, K288, and K312 each coordinate NAD(+). Zn(2+)-binding residues include C416, C419, C434, and C439. One can recognise a BRCT domain in the interval 598-677; that stretch reads NKNMPFSGME…REFINMLEQS (80 aa).

This sequence belongs to the NAD-dependent DNA ligase family. LigA subfamily. Mg(2+) is required as a cofactor. The cofactor is Mn(2+).

It carries out the reaction NAD(+) + (deoxyribonucleotide)n-3'-hydroxyl + 5'-phospho-(deoxyribonucleotide)m = (deoxyribonucleotide)n+m + AMP + beta-nicotinamide D-nucleotide.. DNA ligase that catalyzes the formation of phosphodiester linkages between 5'-phosphoryl and 3'-hydroxyl groups in double-stranded DNA using NAD as a coenzyme and as the energy source for the reaction. It is essential for DNA replication and repair of damaged DNA. This Dehalococcoides mccartyi (strain CBDB1) protein is DNA ligase.